Here is a 906-residue protein sequence, read N- to C-terminus: Protein translocase subunit SecA (906 aa).

Residues glutamine 86, 104–108 (GEGKT), and aspartate 499 each bind ATP. Residues 865 to 885 (VSRIDPKDRNPEDPTSWGRVS) are disordered. Zn(2+) is bound by residues cysteine 890, cysteine 892, cysteine 901, and histidine 902.

The protein belongs to the SecA family. In terms of assembly, monomer and homodimer. Part of the essential Sec protein translocation apparatus which comprises SecA, SecYEG and auxiliary proteins SecDF-YajC and YidC. It depends on Zn(2+) as a cofactor.

The protein localises to the cell inner membrane. Its subcellular location is the cytoplasm. It catalyses the reaction ATP + H2O + cellular proteinSide 1 = ADP + phosphate + cellular proteinSide 2.. In terms of biological role, part of the Sec protein translocase complex. Interacts with the SecYEG preprotein conducting channel. Has a central role in coupling the hydrolysis of ATP to the transfer of proteins into and across the cell membrane, serving both as a receptor for the preprotein-SecB complex and as an ATP-driven molecular motor driving the stepwise translocation of polypeptide chains across the membrane. In Rickettsia canadensis (strain McKiel), this protein is Protein translocase subunit SecA.